The following is a 230-amino-acid chain: Cytidylate kinase (230 aa).

12–20 provides a ligand contact to ATP; sequence GPSGAGKGT.

It belongs to the cytidylate kinase family. Type 1 subfamily.

It is found in the cytoplasm. The catalysed reaction is CMP + ATP = CDP + ADP. It catalyses the reaction dCMP + ATP = dCDP + ADP. The chain is Cytidylate kinase from Aeromonas hydrophila subsp. hydrophila (strain ATCC 7966 / DSM 30187 / BCRC 13018 / CCUG 14551 / JCM 1027 / KCTC 2358 / NCIMB 9240 / NCTC 8049).